Consider the following 296-residue polypeptide: Origin of replication complex subunit 6 (296 aa).

Positions 212–296 (PSKRKHDDDS…MALEVSSAAN (85 aa)) are disordered. Acidic residues predominate over residues 220–236 (DSDSSGESSGDDQDELD). Residues 254–264 (WKSSVLSSNKQ) are compositionally biased toward polar residues.

It belongs to the ORC6 family. In terms of assembly, component of the origin recognition complex (ORC) composed of at least ORC1, ORC2, ORC3, ORC4, ORC5 and ORC6. ORC is regulated in a cell-cycle and development dependent manner. It is sequentially assembled at the exit from anaphase of mitosis and disassembled as cells enter S phase.

The protein resides in the nucleus. Its function is as follows. Component of the origin recognition complex (ORC) that binds origins of replication. DNA-binding is ATP-dependent. The specific DNA sequences that define origins of replication have not been identified yet. ORC is required to assemble the pre-replication complex necessary to initiate DNA replication. The chain is Origin of replication complex subunit 6 from Oryza sativa subsp. indica (Rice).